We begin with the raw amino-acid sequence, 122 residues long: Large ribosomal subunit protein uL14 (122 aa).

Belongs to the universal ribosomal protein uL14 family. As to quaternary structure, part of the 50S ribosomal subunit. Forms a cluster with proteins L3 and L19. In the 70S ribosome, L14 and L19 interact and together make contacts with the 16S rRNA in bridges B5 and B8.

In terms of biological role, binds to 23S rRNA. Forms part of two intersubunit bridges in the 70S ribosome. In Azorhizobium caulinodans (strain ATCC 43989 / DSM 5975 / JCM 20966 / LMG 6465 / NBRC 14845 / NCIMB 13405 / ORS 571), this protein is Large ribosomal subunit protein uL14.